The sequence spans 283 residues: Probable protein phosphatase 2C 17 (283 aa).

The region spanning 32–282 (KYGFSLIKGK…DDISCIVVRF (251 aa)) is the PPM-type phosphatase domain. Mn(2+) contacts are provided by aspartate 69, glycine 70, aspartate 234, and aspartate 273.

The protein belongs to the PP2C family. The cofactor is Mg(2+). Mn(2+) is required as a cofactor.

It carries out the reaction O-phospho-L-seryl-[protein] + H2O = L-seryl-[protein] + phosphate. It catalyses the reaction O-phospho-L-threonyl-[protein] + H2O = L-threonyl-[protein] + phosphate. This Arabidopsis thaliana (Mouse-ear cress) protein is Probable protein phosphatase 2C 17.